The sequence spans 643 residues: Phosphomethylpyrimidine synthase (643 aa).

Residues Asn248, Met277, Tyr306, His342, 362-364, 403-406, and Glu442 each bind substrate; these read SRG and DGLR. Residue His446 participates in Zn(2+) binding. Residue Tyr469 coordinates substrate. His510 contacts Zn(2+). [4Fe-4S] cluster contacts are provided by Cys590, Cys593, and Cys598.

Belongs to the ThiC family. Homodimer. It depends on [4Fe-4S] cluster as a cofactor.

It catalyses the reaction 5-amino-1-(5-phospho-beta-D-ribosyl)imidazole + S-adenosyl-L-methionine = 4-amino-2-methyl-5-(phosphooxymethyl)pyrimidine + CO + 5'-deoxyadenosine + formate + L-methionine + 3 H(+). It participates in cofactor biosynthesis; thiamine diphosphate biosynthesis. Functionally, catalyzes the synthesis of the hydroxymethylpyrimidine phosphate (HMP-P) moiety of thiamine from aminoimidazole ribotide (AIR) in a radical S-adenosyl-L-methionine (SAM)-dependent reaction. This chain is Phosphomethylpyrimidine synthase, found in Paraburkholderia xenovorans (strain LB400).